Here is a 235-residue protein sequence, read N- to C-terminus: tRNA (guanine-N(1)-)-methyltransferase (235 aa).

S-adenosyl-L-methionine is bound by residues glycine 114 and 134–139; that span reads IGDYIL.

The protein belongs to the RNA methyltransferase TrmD family. Homodimer.

Its subcellular location is the cytoplasm. It carries out the reaction guanosine(37) in tRNA + S-adenosyl-L-methionine = N(1)-methylguanosine(37) in tRNA + S-adenosyl-L-homocysteine + H(+). Functionally, specifically methylates guanosine-37 in various tRNAs. This Ehrlichia ruminantium (strain Gardel) protein is tRNA (guanine-N(1)-)-methyltransferase.